The chain runs to 532 residues: CTP synthase (532 aa).

Positions 1 to 267 are amidoligase domain; that stretch reads MTKFIFVTGG…DDIVLKILGL (267 aa). Ser13 is a binding site for CTP. Ser13 is a UTP binding site. Position 14-19 (14-19) interacts with ATP; sequence SLGKGI. Tyr54 is a binding site for L-glutamine. Residue Asp71 coordinates ATP. Mg(2+) is bound by residues Asp71 and Glu141. CTP contacts are provided by residues 148–150, 188–193, and Lys224; these read DIE and KTKPTQ. UTP is bound by residues 188–193 and Lys224; that span reads KTKPTQ. Positions 292–532 constitute a Glutamine amidotransferase type-1 domain; the sequence is EIAIVGKYVE…EFVKATLANR (241 aa). An L-glutamine-binding site is contributed by Gly354. The active-site Nucleophile; for glutamine hydrolysis is Cys381. L-glutamine is bound by residues 382 to 385, Glu405, and Arg462; that span reads LGMQ. Active-site residues include His507 and Glu509.

This sequence belongs to the CTP synthase family. In terms of assembly, homotetramer.

The enzyme catalyses UTP + L-glutamine + ATP + H2O = CTP + L-glutamate + ADP + phosphate + 2 H(+). It catalyses the reaction L-glutamine + H2O = L-glutamate + NH4(+). The catalysed reaction is UTP + NH4(+) + ATP = CTP + ADP + phosphate + 2 H(+). It functions in the pathway pyrimidine metabolism; CTP biosynthesis via de novo pathway; CTP from UDP: step 2/2. Its activity is regulated as follows. Allosterically activated by GTP, when glutamine is the substrate; GTP has no effect on the reaction when ammonia is the substrate. The allosteric effector GTP functions by stabilizing the protein conformation that binds the tetrahedral intermediate(s) formed during glutamine hydrolysis. Inhibited by the product CTP, via allosteric rather than competitive inhibition. In terms of biological role, catalyzes the ATP-dependent amination of UTP to CTP with either L-glutamine or ammonia as the source of nitrogen. Regulates intracellular CTP levels through interactions with the four ribonucleotide triphosphates. This chain is CTP synthase, found in Desulfitobacterium hafniense (strain Y51).